The following is a 163-amino-acid chain: uncharacterized protein (163 aa).

The next 2 membrane-spanning stretches (helical) occupy residues 7 to 27 (YLNEIWLIIGIICILVECYIV) and 51 to 71 (LVIFTLTNQITFFGLFSLVWF).

It localises to the cell membrane. This is an uncharacterized protein from Rickettsia prowazekii (strain Madrid E).